A 1002-amino-acid chain; its full sequence is MEDGHSKTVEQSLNFFGTDGERGLTLDQIKTNQAKYGPNELPTEEGKSIWQLVLEQFDDLLVKILLLAAIISFVLALFEEHEETFTAFVEPLVILLILIANAVVGVWQERNAESAIEALKEYEPEMGKVIRQDKSGIQKVRAKEIVPGDLVEVSVGDKIPADIRLTHIYSTTIRIDQSILTGESVSVIKHTDAIPDPRAVNQDKKNILFSGTNVAAGKARGVVIGTGLSTAIGKIRTEMSETEEIKTPLQQKLDEFGEQLSKVISVICVAVWAINIGHFNDPAHGGSWIKGAIYYFKIAVALAVAAIPEGLPAVITTCLALGTRRMAKKNAIVRSLPSVETLGCTSVICSDKTGTLTTNQMSVSRMLIFEKVEGNDSSFLEFELTGSTYEPIGELFLGGQRVKASDYEALQELATVCIMCNDSAIDYNEFKAAFEKVGEATETALIVLAEKLNAFSVNKSGLDRRSNAIAARGEIETKWKKEFTLEFSRDRKSMSSYCTPLKASRLGTGPKLFVKGAPEGVLDRCTHARVGTSKVPLTSALKAKILALTGQYGTGRDTLRCLALAVADSPIRPEDMDLGDSTKFYQYEVNLTFVGVVGMLDPPRKEVFDAIVRCRAAGIRVIVITGDNKATAEAICRRIGVFTEEEDTTGKSYSGREFDDLSIAEQKAAVARSRLFSRVEPQHKSKIVEYLQGMNEISAMTGDGVNDAPALKKAEIGIAMGSGTAVAKSAAEMVLADDNFSSIVSAVEEGRAIYNNMKQFIRYLISSNIGEVVSIFLTAALGLPEALIPVQLLWVNLVTDGLPATALGFNPPDLDIMDKPPRKADEGLISGWLFFRYMAIGFYVGAATVGAAAWWFIASSEGPGLTYWQLTHHLSCLGGGDEFKGVDCKIFSDPKAMTMALSVLVTIEMLNAMNSLSENQSLISMPPWCNLWLIGSMALSFTLHFVILYVDVLSTVFQVTPLSAEEWITVMKFSIPVVLLDETLKFVARKIADVPDAVVDKW.

The Cytoplasmic portion of the chain corresponds to 1–48 (MEDGHSKTVEQSLNFFGTDGERGLTLDQIKTNQAKYGPNELPTEEGKS). The helical transmembrane segment at 49–69 (IWQLVLEQFDDLLVKILLLAA) threads the bilayer. Residues 70 to 89 (IISFVLALFEEHEETFTAFV) lie on the Lumenal side of the membrane. The chain crosses the membrane as a helical span at residues 90 to 110 (EPLVILLILIANAVVGVWQER). The Cytoplasmic portion of the chain corresponds to 111–253 (NAESAIEALK…EIKTPLQQKL (143 aa)). A helical membrane pass occupies residues 254-273 (DEFGEQLSKVISVICVAVWA). At 274–295 (INIGHFNDPAHGGSWIKGAIYY) the chain is on the lumenal side. A helical membrane pass occupies residues 296–313 (FKIAVALAVAAIPEGLPA). Ca(2+)-binding residues include valine 304, alanine 305, isoleucine 307, and glutamate 309. Residues 314–757 (VITTCLALGT…EEGRAIYNNM (444 aa)) lie on the Cytoplasmic side of the membrane. The active-site 4-aspartylphosphate intermediate is the aspartate 351. Mg(2+)-binding residues include aspartate 703 and aspartate 707. The chain crosses the membrane as a helical span at residues 758–777 (KQFIRYLISSNIGEVVSIFL). Residues asparagine 768 and glutamate 771 each coordinate Ca(2+). Topologically, residues 778 to 787 (TAALGLPEAL) are lumenal. A helical membrane pass occupies residues 788-808 (IPVQLLWVNLVTDGLPATALG). The Ca(2+) site is built by asparagine 796, threonine 799, and aspartate 800. The Cytoplasmic portion of the chain corresponds to 809–828 (FNPPDLDIMDKPPRKADEGL). The helical transmembrane segment at 829–851 (ISGWLFFRYMAIGFYVGAATVGA) threads the bilayer. Over 852-897 (AAWWFIASSEGPGLTYWQLTHHLSCLGGGDEFKGVDCKIFSDPKAM) the chain is Lumenal. Residues 898-917 (TMALSVLVTIEMLNAMNSLS) form a helical membrane-spanning segment. Residue glutamate 908 coordinates Ca(2+). Residues 918–930 (ENQSLISMPPWCN) are Cytoplasmic-facing. Residues 931 to 949 (LWLIGSMALSFTLHFVILY) form a helical membrane-spanning segment. At 950-964 (VDVLSTVFQVTPLSA) the chain is on the lumenal side. The helical transmembrane segment at 965-985 (EEWITVMKFSIPVVLLDETLK) threads the bilayer. Topologically, residues 986 to 1002 (FVARKIADVPDAVVDKW) are cytoplasmic.

The protein belongs to the cation transport ATPase (P-type) (TC 3.A.3) family.

It is found in the endoplasmic reticulum membrane. The protein resides in the sarcoplasmic reticulum membrane. It carries out the reaction Ca(2+)(in) + ATP + H2O = Ca(2+)(out) + ADP + phosphate + H(+). Its function is as follows. This magnesium-dependent enzyme catalyzes the hydrolysis of ATP coupled with the transport of calcium. This chain is Calcium-transporting ATPase sarcoplasmic/endoplasmic reticulum type, found in Drosophila pseudoobscura pseudoobscura (Fruit fly).